The following is a 555-amino-acid chain: MNKKQNFYAAIIVAIFLCLQLSHGSSGVSFEKTPAIKIVGNKFFDSESGEQFFIKGIAYQLQRSEEELSNANGAFETSYIDALADPKICLRDIPFLKMLGVNTLRVYAIDPTKSHDICMEALSAEGMYVLLDLSEPDISINRENPSWDVHIFERYKSVIDAMSSFPNLLGYFAGNEVTNDHTNTFASPFVKAAIRDAKEYISHSNHRKIPVGYSTNDDAMTRDNLARYFVCGDVKADFYGINMYEWCGYSTYGTSGYRERTKEFEGYPIPVFFSEFGCNLVRPRPFTEVSALYGNKMSSVWSGGLAYMYFEEENEYGVVKINDNDGVDILPDFKNLKKEFAKADPKGITEEEYLTAKEPTEVESVECPHIAVGVWEANEKLPETPDRSKCACLDEILPCEIVPFGAESGKYEEYFSYLCSKVDCSDILANGKTGEYGEFSDCSVEQKLSLQLSKLYCKIGANDRHCPLNDKNVYFNLESLQPLTSESICKNVFDSIRNITYNHGDYSKSNPSRSKESLNVKYPSSEERENDGTIAFKTSGFVILLISMIAAGILL.

The N-terminal stretch at 1 to 24 is a signal peptide; it reads MNKKQNFYAAIIVAIFLCLQLSHG. Cysteine 89 and cysteine 118 form a disulfide bridge. (1,3-beta-D-glucosyl)n-binding positions include tyrosine 107, 134 to 142, asparagine 175, glutamate 176, aspartate 217, and arginine 222; that span reads SEPDISINR. Residue glutamate 176 is the Proton donor of the active site. Intrachain disulfides connect cysteine 231–cysteine 367, cysteine 247–cysteine 278, cysteine 390–cysteine 442, cysteine 392–cysteine 489, cysteine 399–cysteine 466, and cysteine 419–cysteine 424. Residue glutamate 275 is the Nucleophile of the active site. Tyrosine 307 is a (1,3-beta-D-glucosyl)n binding site. Asparagine 498 is a glycosylation site (N-linked (GlcNAc...) asparagine). A lipid anchor (GPI-anchor amidated aspartate) is attached at aspartate 531. Residues 532 to 555 constitute a propeptide, removed in mature form; the sequence is GTIAFKTSGFVILLISMIAAGILL.

This sequence belongs to the glycosyl hydrolase 72 family. N-glycosylated.

It localises to the cell membrane. Its function is as follows. Splits internally a 1,3-beta-glucan molecule and transfers the newly generated reducing end (the donor) to the non-reducing end of another 1,3-beta-glucan molecule (the acceptor) forming a 1,3-beta linkage, resulting in the elongation of 1,3-beta-glucan chains in the cell wall. Involved in spore wall assembly. This chain is 1,3-beta-glucanosyltransferase GAS2 (GAS2), found in Saccharomyces cerevisiae (strain ATCC 204508 / S288c) (Baker's yeast).